The sequence spans 549 residues: Cation/acetate symporter ActP (549 aa).

The Periplasmic segment spans residues 1–32; that stretch reads MKRVLTALAATLPFAANAADAISGAVERQPTN. Residues 33-55 traverse the membrane as a helical segment; it reads WQAIIMFLIFVVFTLGITYWASK. Topologically, residues 56 to 75 are cytoplasmic; the sequence is RVRSRSDYYTAGGNITGFQN. A helical transmembrane segment spans residues 76–98; it reads GLAIAGDYMSAASFLGISALVFT. Residues 99-102 are Periplasmic-facing; sequence SGYD. The chain crosses the membrane as a helical span at residues 103–125; that stretch reads GLIYSLGFLVGWPIILFLIAERL. Residues 126–145 lie on the Cytoplasmic side of the membrane; it reads RNLGRYTSADVASYRLKQGP. The helical transmembrane segment at 146–168 threads the bilayer; it reads IRILSACGSLVVVALYLIAQMVG. Topologically, residues 169–182 are periplasmic; the sequence is AGKLIELLFGLNYH. The chain crosses the membrane as a helical span at residues 183–205; sequence IAVVLVGVLMMMYVLFGGMLATT. Residues 206 to 211 lie on the Cytoplasmic side of the membrane; the sequence is WVQIIK. A helical transmembrane segment spans residues 212–234; sequence AVLLLFGASFMAFMVMKHVGFSF. Residues 235–260 lie on the Periplasmic side of the membrane; the sequence is NNLFSEAMAVHPKGVDIMKPGGLVKD. A helical membrane pass occupies residues 261–283; sequence PISALSLGLGLMFGTAGLPHILM. Over 284–302 the chain is Cytoplasmic; it reads RFFTVSDAREARKSVFYAT. The helical transmembrane segment at 303–325 threads the bilayer; the sequence is GFMGYFYILTFIIGFGAIMLVGA. Residues 326–349 are Periplasmic-facing; it reads NPEYKDAAGHLIGGNNMAAVHLAN. The helical transmembrane segment at 350-372 threads the bilayer; the sequence is AVGGNLFLGFISAVAFATILAVV. Residues 373–401 lie on the Cytoplasmic side of the membrane; sequence ADLTLAGASAVSHDLYANVFKKGATEREE. Residues 402–424 form a helical membrane-spanning segment; the sequence is LRVSKITVLILGVIAIILGVLFE. The Periplasmic segment spans residues 425 to 427; sequence NQN. Residues 428–450 traverse the membrane as a helical segment; that stretch reads IAFMVGLAFAIAASCNFPIILLS. At 451 to 461 the chain is on the cytoplasmic side; sequence MYWSKLTTRGA. A helical transmembrane segment spans residues 462 to 484; it reads MLGGWLGLITAVVLMILGPTIWV. Residues 485-493 are Periplasmic-facing; the sequence is QILGHEKAI. The helical transmembrane segment at 494–516 threads the bilayer; that stretch reads FPYEYPALFSISVAFLGIWFFSA. Residues 517–549 are Cytoplasmic-facing; the sequence is TDNSAEGARERELFRAQFIRSQTGFGVEQGRAH.

The protein belongs to the sodium:solute symporter (SSF) (TC 2.A.21) family.

Its subcellular location is the cell inner membrane. Transports acetate. The sequence is that of Cation/acetate symporter ActP (actP) from Shigella flexneri.